A 196-amino-acid polypeptide reads, in one-letter code: Small ribosomal subunit protein uS4c (196 aa).

The tract at residues 17-38 (ALPGLTRKTPKSRSNLKKKFHS) is disordered. Over residues 24 to 38 (KTPKSRSNLKKKFHS) the composition is skewed to basic residues. Residues 89 to 169 (MRLDNILFRL…LPKHLTIDTL (81 aa)) form the S4 RNA-binding domain.

Belongs to the universal ribosomal protein uS4 family. As to quaternary structure, part of the 30S ribosomal subunit. Contacts protein S5. The interaction surface between S4 and S5 is involved in control of translational fidelity.

It localises to the plastid. The protein localises to the chloroplast. In terms of biological role, one of the primary rRNA binding proteins, it binds directly to 16S rRNA where it nucleates assembly of the body of the 30S subunit. With S5 and S12 plays an important role in translational accuracy. The protein is Small ribosomal subunit protein uS4c (rps4) of Lygeum spartum.